Consider the following 156-residue polypeptide: ATP synthase subunit b (156 aa).

The chain crosses the membrane as a helical span at residues 7 to 27; it reads IFFQMLVFFVLGWFTMKFVWP.

The protein belongs to the ATPase B chain family. As to quaternary structure, F-type ATPases have 2 components, F(1) - the catalytic core - and F(0) - the membrane proton channel. F(1) has five subunits: alpha(3), beta(3), gamma(1), delta(1), epsilon(1). F(0) has three main subunits: a(1), b(2) and c(10-14). The alpha and beta chains form an alternating ring which encloses part of the gamma chain. F(1) is attached to F(0) by a central stalk formed by the gamma and epsilon chains, while a peripheral stalk is formed by the delta and b chains.

The protein localises to the cell inner membrane. In terms of biological role, f(1)F(0) ATP synthase produces ATP from ADP in the presence of a proton or sodium gradient. F-type ATPases consist of two structural domains, F(1) containing the extramembraneous catalytic core and F(0) containing the membrane proton channel, linked together by a central stalk and a peripheral stalk. During catalysis, ATP synthesis in the catalytic domain of F(1) is coupled via a rotary mechanism of the central stalk subunits to proton translocation. Component of the F(0) channel, it forms part of the peripheral stalk, linking F(1) to F(0). The polypeptide is ATP synthase subunit b (Bordetella petrii (strain ATCC BAA-461 / DSM 12804 / CCUG 43448)).